We begin with the raw amino-acid sequence, 368 residues long: Peptide chain release factor 2 (368 aa).

N5-methylglutamine is present on Q251.

Belongs to the prokaryotic/mitochondrial release factor family. In terms of processing, methylated by PrmC. Methylation increases the termination efficiency of RF2.

It localises to the cytoplasm. Functionally, peptide chain release factor 2 directs the termination of translation in response to the peptide chain termination codons UGA and UAA. This is Peptide chain release factor 2 from Nitratiruptor sp. (strain SB155-2).